The following is a 173-amino-acid chain: RxLR effector protein PITG_10232 (173 aa).

The signal sequence occupies residues 1-24; sequence MRLGYLIVGCAVALLATTDGVVDA. The disordered stretch occupies residues 25–64; that stretch reads SSKHKQLSTDVPRPADDISSERFLRSQDTPEDDGNPAHED. The span at 37 to 49 shows a compositional bias: basic and acidic residues; the sequence is RPADDISSERFLR. Residues 46–65 carry the RxLR-dEER motif; it reads RFLRSQDTPEDDGNPAHEDR.

The protein belongs to the RxLR effector family.

Its subcellular location is the secreted. It localises to the host nucleus. The protein resides in the host cytoplasm. Effector that leads to host programmed cell death. This Phytophthora infestans (strain T30-4) (Potato late blight agent) protein is RxLR effector protein PITG_10232.